The chain runs to 513 residues: Anthranilate synthase component 1 (513 aa).

Residues Ser-50 and 279-281 (PYM) each bind L-tryptophan. Residue 314–315 (GT) coordinates chorismate. Glu-341 is a binding site for Mg(2+). Chorismate-binding positions include Tyr-429, Arg-449, 463–465 (GAG), and Gly-465. Residue Glu-478 participates in Mg(2+) binding.

The protein belongs to the anthranilate synthase component I family. Heterotetramer consisting of two non-identical subunits: a beta subunit (TrpG) and a large alpha subunit (TrpE). Requires Mg(2+) as cofactor.

The enzyme catalyses chorismate + L-glutamine = anthranilate + pyruvate + L-glutamate + H(+). Its pathway is amino-acid biosynthesis; L-tryptophan biosynthesis; L-tryptophan from chorismate: step 1/5. Feedback inhibited by tryptophan. Its function is as follows. Part of a heterotetrameric complex that catalyzes the two-step biosynthesis of anthranilate, an intermediate in the biosynthesis of L-tryptophan. In the first step, the glutamine-binding beta subunit (TrpG) of anthranilate synthase (AS) provides the glutamine amidotransferase activity which generates ammonia as a substrate that, along with chorismate, is used in the second step, catalyzed by the large alpha subunit of AS (TrpE) to produce anthranilate. In the absence of TrpG, TrpE can synthesize anthranilate directly from chorismate and high concentrations of ammonia. The polypeptide is Anthranilate synthase component 1 (trpE) (Bacillus pumilus (Bacillus mesentericus)).